The chain runs to 232 residues: MKVYKLVLMRHGESIWNELNKFTGWHDVDLSNRGVQESLKAAKLLKKHGFYFDYAYSSVLKRSIHTLWNIIKFLDQSWIPVKKSWRLNERHYGALEGLNKDDVIQKYGNDKVQQWRRSFNIAPPKISYLEKKKLAHDSRYNNINFDILPYCESLKLTTQRVLPYWLNEIFPRFQKNTKIIIVAHGNSLRALIKYLNNINDIDILNLNIATGFPIIYEFNSEFKPIQYYYLKQ.

Substrate contacts are provided by residues 10-17 (RHGESIWN), 23-24 (TG), R62, 89-92 (ERHY), K100, 116-117 (RR), and 185-186 (GN). The Tele-phosphohistidine intermediate role is filled by H11. The Proton donor/acceptor role is filled by E89.

It belongs to the phosphoglycerate mutase family. BPG-dependent PGAM subfamily. In terms of assembly, homodimer.

It carries out the reaction (2R)-2-phosphoglycerate = (2R)-3-phosphoglycerate. Its pathway is carbohydrate degradation; glycolysis; pyruvate from D-glyceraldehyde 3-phosphate: step 3/5. In terms of biological role, catalyzes the interconversion of 2-phosphoglycerate and 3-phosphoglycerate. In Buchnera aphidicola subsp. Baizongia pistaciae (strain Bp), this protein is 2,3-bisphosphoglycerate-dependent phosphoglycerate mutase.